Consider the following 119-residue polypeptide: Large ribosomal subunit protein uL18 (119 aa).

The protein belongs to the universal ribosomal protein uL18 family. In terms of assembly, part of the 50S ribosomal subunit; part of the 5S rRNA/L5/L18/L25 subcomplex. Contacts the 5S and 23S rRNAs.

This is one of the proteins that bind and probably mediate the attachment of the 5S RNA into the large ribosomal subunit, where it forms part of the central protuberance. In Legionella pneumophila (strain Paris), this protein is Large ribosomal subunit protein uL18.